The chain runs to 341 residues: L-sulfolactate dehydrogenase (341 aa).

It belongs to the LDH2/MDH2 oxidoreductase family.

The protein localises to the cytoplasm. It carries out the reaction a (2S)-2-hydroxycarboxylate + NAD(+) = a 2-oxocarboxylate + NADH + H(+). It participates in cofactor biosynthesis; coenzyme M biosynthesis; sulfoacetaldehyde from phosphoenolpyruvate and sulfite: step 3/4. It functions in the pathway cofactor biosynthesis; 5,6,7,8-tetrahydromethanopterin biosynthesis. Catalyzes the reduction of sulfopyruvate to (R)-sulfolactate. Involved in the biosynthesis of both coenzyme M (with (R)-sulfolactate) and methanopterin (with alpha-ketoglutarate). This is L-sulfolactate dehydrogenase (comC) from Methanothermobacter thermautotrophicus (strain ATCC 29096 / DSM 1053 / JCM 10044 / NBRC 100330 / Delta H) (Methanobacterium thermoautotrophicum).